A 406-amino-acid polypeptide reads, in one-letter code: MKNEVKKVVLAYSGGLDTSIILKWLQDEYNCEVVTFTADIGQGEELEPARKKALSLGIKEENIFIKDLRDEFVKDYVFPMFRANAIYEGEYLLGTSIARPLIAKTQAQIALQTGADAVSHGATGKGNDQVRFELGYLAFSPDLKIIAPWREWDLNSREKLLAYAQKHGIDISKKKGKSPYSMDANLLHISYEGLVLEDPAHAPEEDMWRWSKSPKDAPNESEIIELDFQKGDLVAINGEKLSPAGLLTKLNELGCKHGIGRLDIVENRYVGMKSRGCYETPGGTILLKAHRALESITLDREAAHLKDELMPKYASLIYNGYWFSPERMMLQALIDESQIHANGRVKLELYKGNVMVIGRESANDSLFNAAYCTFEEDEVYNQKDAAGFIKLNALRFIIAGKNGRKF.

ATP-binding positions include 11-19 (AYSGGLDTS) and A38. Residues Y91 and S96 each contribute to the L-citrulline site. Position 121 (G121) interacts with ATP. Residues T123, N127, and D128 each contribute to the L-aspartate site. N127 serves as a coordination point for L-citrulline. Positions 131, 181, 190, 266, and 278 each coordinate L-citrulline.

This sequence belongs to the argininosuccinate synthase family. Type 1 subfamily. Homotetramer.

Its subcellular location is the cytoplasm. The enzyme catalyses L-citrulline + L-aspartate + ATP = 2-(N(omega)-L-arginino)succinate + AMP + diphosphate + H(+). Its pathway is amino-acid biosynthesis; L-arginine biosynthesis; L-arginine from L-ornithine and carbamoyl phosphate: step 2/3. This chain is Argininosuccinate synthase, found in Campylobacter jejuni subsp. jejuni serotype O:2 (strain ATCC 700819 / NCTC 11168).